The primary structure comprises 110 residues: Translation initiation factor 1A 3 (110 aa).

A disordered region spans residues Met-1 to Lys-29. Positions Ser-7–Asn-18 are enriched in low complexity. The region spanning Thr-22–Thr-96 is the S1-like domain.

This sequence belongs to the eIF-1A family.

Seems to be required for maximal rate of protein biosynthesis. Enhances ribosome dissociation into subunits and stabilizes the binding of the initiator Met-tRNA(I) to 40 S ribosomal subunits. This Methanosarcina acetivorans (strain ATCC 35395 / DSM 2834 / JCM 12185 / C2A) protein is Translation initiation factor 1A 3 (eIF1A3).